The sequence spans 479 residues: Replication factor C large subunit (479 aa).

Residue 50-57 coordinates ATP; that stretch reads GPPGSGKT. Residues 420-468 are compositionally biased toward basic and acidic residues; that stretch reads EKIRKERKEEEKVEVREEKPEEKVEEKREERETKKEKEKKEEKKAEKKG. The tract at residues 420–479 is disordered; the sequence is EKIRKERKEEEKVEVREEKPEEKVEEKREERETKKEKEKKEEKKAEKKGKQVTLFDFIKK.

Belongs to the activator 1 small subunits family. RfcL subfamily. Heterohexamer composed of four small subunits (RfcS) and two large subunits (RfcL).

Its function is as follows. Part of the RFC clamp loader complex which loads the PCNA sliding clamp onto DNA. The complex possesses DNA-independent ATPase activity. The polypeptide is Replication factor C large subunit (rfcL) (Pyrococcus abyssi (strain GE5 / Orsay)).